The following is a 257-amino-acid chain: ATP synthase delta chain, chloroplastic (257 aa).

A chloroplast-targeting transit peptide spans 1–70 (MAALQNPVAL…PRGGALGTRM (70 aa)).

Belongs to the ATPase delta chain family. As to quaternary structure, F-type ATPases have 2 components, CF(1) - the catalytic core - and CF(0) - the membrane proton channel. CF(1) has five subunits: alpha(3), beta(3), gamma(1), delta(1), epsilon(1). CF(0) has three main subunits: a, b and c.

The protein localises to the plastid. It is found in the chloroplast thylakoid membrane. In terms of biological role, this protein seems to be part of the stalk that links CF(0) to CF(1). It either transmits conformational changes from CF(0) into CF(1) or is implicated in proton conduction. The chain is ATP synthase delta chain, chloroplastic (ATPD) from Spinacia oleracea (Spinach).